Here is a 167-residue protein sequence, read N- to C-terminus: UPF0102 protein RB9115 (167 aa).

It belongs to the UPF0102 family.

This Rhodopirellula baltica (strain DSM 10527 / NCIMB 13988 / SH1) protein is UPF0102 protein RB9115.